The primary structure comprises 185 residues: Threonylcarbamoyl-AMP synthase (185 aa).

The region spanning 4–185 (DWRVQQVARV…LRSGEVIRPA (182 aa)) is the YrdC-like domain.

The protein belongs to the SUA5 family. TsaC subfamily.

The protein localises to the cytoplasm. It carries out the reaction L-threonine + hydrogencarbonate + ATP = L-threonylcarbamoyladenylate + diphosphate + H2O. Functionally, required for the formation of a threonylcarbamoyl group on adenosine at position 37 (t(6)A37) in tRNAs that read codons beginning with adenine. Catalyzes the conversion of L-threonine, HCO(3)(-)/CO(2) and ATP to give threonylcarbamoyl-AMP (TC-AMP) as the acyladenylate intermediate, with the release of diphosphate. This is Threonylcarbamoyl-AMP synthase from Stutzerimonas stutzeri (strain A1501) (Pseudomonas stutzeri).